The chain runs to 520 residues: Amine oxidase [flavin-containing] B (520 aa).

Position 2 is an N-acetylserine (Ser2). The Cytoplasmic portion of the chain corresponds to 2–489 (SNKCDVVVVG…TFLERHLPSV (488 aa)). N6-acetyllysine is present on Lys52. Cys397 carries the post-translational modification S-8alpha-FAD cysteine. The chain crosses the membrane as a helical; Anchor for type IV membrane protein span at residues 490–516 (PGLLRLIGLTTIFSATALGFLAHKRGL). The Mitochondrial intermembrane portion of the chain corresponds to 517–520 (LVRV).

In terms of assembly, monomer, homo- or heterodimer (containing two subunits of similar size). Each subunit contains a covalently bound flavin. Enzymatically active as monomer. The cofactor is FAD.

It localises to the mitochondrion outer membrane. It carries out the reaction a secondary aliphatic amine + O2 + H2O = a primary amine + an aldehyde + H2O2. It catalyses the reaction (R)-adrenaline + O2 + H2O = (R)-3,4-dihydroxymandelaldehyde + methylamine + H2O2. The enzyme catalyses a primary methyl amine + O2 + H2O = an aldehyde + H2O2 + NH4(+). The catalysed reaction is benzylamine + O2 + H2O = benzaldehyde + H2O2 + NH4(+). It carries out the reaction dopamine + O2 + H2O = 3,4-dihydroxyphenylacetaldehyde + H2O2 + NH4(+). It catalyses the reaction tyramine + O2 + H2O = (4-hydroxyphenyl)acetaldehyde + H2O2 + NH4(+). The enzyme catalyses (R)-noradrenaline + O2 + H2O = (R)-3,4-dihydroxymandelaldehyde + H2O2 + NH4(+). The catalysed reaction is 2-phenylethylamine + O2 + H2O = 2-phenylacetaldehyde + H2O2 + NH4(+). It carries out the reaction N-acetylputrescine + O2 + H2O = 4-acetamidobutanal + H2O2 + NH4(+). With respect to regulation, inhibited by deprenyl. Catalyzes the oxidative deamination of primary and some secondary amines such as neurotransmitters, and exogenous amines including the tertiary amine, neurotoxin 1-methyl-4-phenyl-1,2,3,6-tetrahydropyridine (MPTP), with concomitant reduction of oxygen to hydrogen peroxide and participates in the metabolism of neuroactive and vasoactive amines in the central nervous system and peripheral tissues. Preferentially degrades benzylamine and phenylethylamine. This Homo sapiens (Human) protein is Amine oxidase [flavin-containing] B.